A 57-amino-acid chain; its full sequence is U-Asilidin(1)-Mar2a (57 aa).

The first 24 residues, 1-24, serve as a signal peptide directing secretion; it reads MAPLLKLNILLLIVLICFTFHANA. Disulfide bonds link Cys28–Cys44, Cys35–Cys48, and Cys43–Cys53.

It belongs to the asilidin-1 family. Expressed by the venom gland. Exclusively expressed in the venom thoracic glands (and not in body tissues).

The protein resides in the secreted. In terms of biological role, may act as a neurotoxin. The protein is U-Asilidin(1)-Mar2a of Machimus arthriticus (Breck robberfly).